The chain runs to 90 residues: Small ribosomal subunit protein uS17 (90 aa).

The protein belongs to the universal ribosomal protein uS17 family. In terms of assembly, part of the 30S ribosomal subunit.

One of the primary rRNA binding proteins, it binds specifically to the 5'-end of 16S ribosomal RNA. The protein is Small ribosomal subunit protein uS17 of Burkholderia cenocepacia (strain ATCC BAA-245 / DSM 16553 / LMG 16656 / NCTC 13227 / J2315 / CF5610) (Burkholderia cepacia (strain J2315)).